The chain runs to 468 residues: MHYLDNLLLNTDSYKASHWLQYPPGTDASFFYVESRGGVYDQTAFFGLQSILKEAINRPVTHADIDDAKALLAAHGEPFNEAGWRDIVDRLGGQLPIRIRAVPEGCVVPTHNVLMTIESTDAKAFWVPSYLETLLLRVWYPVTVATVSWQVKQIVRDFLQRTSDDPEGQLPFKLHDFGARGVSSLGSAALGGAAHLVNFLGTDTLSALLLARAHYHTPVAGYSIPAAEHSTITSWGREREVDAYRNMLTQFARPGAIVAVVSDSYDIYRAIREHWGTTLREEIIASGATVVIRPDSGDPVDVVEQCLLLLDEAFGHQVNGKGYKVLNHVRVIQGDGINPQSLRAILERITAAGYAADNVAFGMGGALLQKVDRDTQKFALKCSAVRVDGAWIDVYKDPITDQGKQSKRGRLTLLRDRATGQYRSALLDEVATHAGDSDDALVTVWENGQMLREWTLEQVRAHADAARL.

Arg-180 contacts diphosphate. Position 203 (Asp-203) interacts with beta-nicotinamide D-ribonucleotide. Diphosphate is bound by residues His-229 and Arg-293. The residue at position 229 (His-229) is a Phosphohistidine; by autocatalysis. Residues Asp-335 and Arg-373 each coordinate beta-nicotinamide D-ribonucleotide.

It belongs to the NAPRTase family. Homodimer. The dimeric structure consists of two protomers arranged head to tail, with domain A on one protomer interacting with domain B on the other protomer. In terms of processing, phosphorylation at His-229 plays a crucial role in enhancing the substrate affinity and is important for maintaining enzymatic activity.

The enzyme catalyses beta-nicotinamide D-ribonucleotide + diphosphate = 5-phospho-alpha-D-ribose 1-diphosphate + nicotinamide + H(+). Its pathway is cofactor biosynthesis; NAD(+) biosynthesis; nicotinamide D-ribonucleotide from 5-phospho-alpha-D-ribose 1-diphosphate and nicotinamide: step 1/1. With respect to regulation, ATP-dependent autophosphorylation plays a vital role in nicotinamide binding and enzyme activation. Activity is inhibited by FK866. In terms of biological role, catalyzes the condensation of nicotinamide with 5-phosphoribosyl-1-pyrophosphate to yield nicotinamide mononucleotide, an intermediate in the biosynthesis of NAD. Plays an important role in the biosynthesis of NAD via the nicotinamide (NAM) salvage pathway. Is also capable of hydrolyzing ATP and shows ATP-dependent autophosphorylation activity. The sequence is that of Nicotinamide phosphoribosyltransferase from Xanthomonas campestris pv. campestris (strain 8004).